The primary structure comprises 249 residues: Solute carrier family 25 member 35 (249 aa).

Solcar repeat units lie at residues 1 to 90 (MDFL…AEAG) and 152 to 243 (QSWK…LRMV). 4 helical membrane passes run 38 to 58 (TYQRHYRNVFHAFITIGKVDG), 59 to 79 (LAALQRGLAPALLYQFLMNGI), 154 to 174 (WKVALAAAMVSGIAVVLAMTP), and 226 to 249 (LGPHTILSLFFWDQLRMVYYTYTK).

Belongs to the mitochondrial carrier (TC 2.A.29) family.

It is found in the mitochondrion inner membrane. It catalyses the reaction a dicarboxylate(in) + sulfate(out) = a dicarboxylate(out) + sulfate(in). Putative antiporter that exchanges dicarboxylates and sulfur oxoanions across the inner membrane of mitochondria. In Bos taurus (Bovine), this protein is Solute carrier family 25 member 35 (SLC25A35).